The sequence spans 294 residues: Ferredoxin--NADP reductase (294 aa).

The 125-residue stretch at 13–137 folds into the FAD-binding FR-type domain; that stretch reads KNPYIGKCLS…TGPVGKEMLL (125 aa). FAD contacts are provided by residues 72 to 75, 93 to 95, tyrosine 99, 111 to 113, and threonine 152; these read RLYS, CVR, and VCS. NADP(+) contacts are provided by serine 75 and arginine 95. NADP(+) contacts are provided by residues threonine 152, 184–185, 214–215, lysine 224, 224–228, 253–254, and glutamate 292; these read IP, SR, KMYIQ, and GL.

This sequence belongs to the ferredoxin--NADP reductase type 1 family. It depends on FAD as a cofactor.

The protein localises to the cellular thylakoid membrane. The catalysed reaction is 2 reduced [2Fe-2S]-[ferredoxin] + NADP(+) + H(+) = 2 oxidized [2Fe-2S]-[ferredoxin] + NADPH. The sequence is that of Ferredoxin--NADP reductase (petH) from Spirulina sp.